A 273-amino-acid chain; its full sequence is Large ribosomal subunit protein uL2 (273 aa).

2 disordered regions span residues 31–50 and 221–273; these read APLL…GRIT and RGTA…RRGK. Residues 253–273 show a composition bias toward basic residues; the sequence is KGKKTRHNKRTDKYIVRRRGK.

This sequence belongs to the universal ribosomal protein uL2 family. Part of the 50S ribosomal subunit. Forms a bridge to the 30S subunit in the 70S ribosome.

One of the primary rRNA binding proteins. Required for association of the 30S and 50S subunits to form the 70S ribosome, for tRNA binding and peptide bond formation. It has been suggested to have peptidyltransferase activity; this is somewhat controversial. Makes several contacts with the 16S rRNA in the 70S ribosome. The protein is Large ribosomal subunit protein uL2 of Actinobacillus pleuropneumoniae serotype 7 (strain AP76).